The following is a 640-amino-acid chain: G protein-coupled receptor kinase 1 (640 aa).

The N-terminal stretch occupies residues 1–201 (MEIENIVANT…LEKRPVDKHT (201 aa)). Residues 52-187 (YAFVVEKQPI…IQTMYFHRFL (136 aa)) form the RGS domain. One can recognise a Protein kinase domain in the interval 202 to 469 (FRLYRVLGKG…AEEIRAHPFF (268 aa)). ATP-binding positions include 208-216 (LGKGGFGEV) and K231. The Proton acceptor role is filled by D327. An AGC-kinase C-terminal domain is found at 479–544 (EPVPWKKMEA…GCVSIPWQSE (66 aa)). Residues 610-640 (GVDQQQPSTSAKPAAVRSSRAASASGRTSMI) are disordered. The segment covering 619 to 640 (SAKPAAVRSSRAASASGRTSMI) has biased composition (low complexity).

Belongs to the protein kinase superfamily. AGC Ser/Thr protein kinase family. GPRK subfamily.

It catalyses the reaction [G-protein-coupled receptor] + ATP = [G-protein-coupled receptor]-phosphate + ADP + H(+). In terms of biological role, specifically phosphorylates the activated forms of G protein-coupled receptors. The chain is G protein-coupled receptor kinase 1 (grk-1) from Caenorhabditis briggsae.